Consider the following 380-residue polypeptide: E3 ubiquitin-protein ligase RNF13 (380 aa).

Residues 1–34 (MLLSIGMLMLSATQVYTILTVQLFAFLNLLPVEA) form the signal peptide. The Lumenal portion of the chain corresponds to 35–182 (DILAYNFENA…VPELSLPLEY (148 aa)). One can recognise a PA domain in the interval 64–160 (LKGFLINSKP…GESSANSLKD (97 aa)). Residue Asn88 is glycosylated (N-linked (GlcNAc...) asparagine). The helical transmembrane segment at 183 to 203 (YLIPFLIIVGICLILIVIFMI) threads the bilayer. Residues 204–380 (TKFVQDRHRN…EPDYNIANTV (177 aa)) lie on the Cytoplasmic side of the membrane. An RING-type; atypical zinc finger spans residues 240 to 282 (CAICLEEYEDGDKLRILPCSHAYHCKCVDPWLTKTKKTCPVCK). Residues 285–380 (VVPSQGDSDS…EPDYNIANTV (96 aa)) are disordered. The span at 338-356 (SDYEDDDNEETDSSDADNE) shows a compositional bias: acidic residues.

As to quaternary structure, interacts with ERN1. Post-translationally, autoubiquitinated.

The protein resides in the endoplasmic reticulum membrane. The protein localises to the late endosome membrane. It localises to the lysosome membrane. It is found in the nucleus inner membrane. The enzyme catalyses S-ubiquitinyl-[E2 ubiquitin-conjugating enzyme]-L-cysteine + [acceptor protein]-L-lysine = [E2 ubiquitin-conjugating enzyme]-L-cysteine + N(6)-ubiquitinyl-[acceptor protein]-L-lysine.. It participates in protein modification; protein ubiquitination. Functionally, E3 ubiquitin-protein ligase that regulates cell proliferation. Involved in apoptosis regulation. Mediates ER stress-induced activation of JNK signaling pathway and apoptosis by promoting ERN1 activation and splicing of XBP1 mRNA. Also involved in protein trafficking and localization. The chain is E3 ubiquitin-protein ligase RNF13 (Rnf13) from Rattus norvegicus (Rat).